The following is a 124-amino-acid chain: Profilin-2 (124 aa).

The protein belongs to the profilin family. In terms of assembly, occurs in many kinds of cells as a complex with monomeric actin in a 1:1 ratio. Interacts with forH.

The protein localises to the cytoplasm. It is found in the cytoskeleton. Binds to actin and affects the structure of the cytoskeleton. At high concentrations, profilin prevents the polymerization of actin, whereas it enhances it at low concentrations. By binding to PIP2, it inhibits the formation of IP3 and DG. In Dictyostelium discoideum (Social amoeba), this protein is Profilin-2 (proB).